The primary structure comprises 341 residues: Cyclic GMP-AMP synthase (341 aa).

S56 contacts ATP. Residues D71 and D73 contribute to the active site. D73 is a binding site for Mg(2+). ATP is bound at residue N109. The active site involves D123. Residue D123 coordinates Mg(2+). The ATP site is built by L192 and D238.

Belongs to the CD-NTase family. B04 subfamily. As to quaternary structure, monomer. The cofactor is Mg(2+).

The catalysed reaction is GTP + ATP = 3',3'-cGAMP + 2 diphosphate. In terms of biological role, cyclic nucleotide synthase (second messenger synthase) of a CBASS antivirus system. CBASS (cyclic oligonucleotide-based antiphage signaling system) provides immunity against bacteriophage. The CD-NTase protein synthesizes cyclic nucleotides in response to infection; these serve as specific second messenger signals. The signals activate a diverse range of effectors, leading to bacterial cell death and thus abortive phage infection. A type II-A(GA) CBASS system. Functionally, catalyzes the synthesis of 3'3'-cyclic GMP-AMP (3'3'-cGAMP) from GTP and ATP, a second messenger in cell signal transduction. May make another product. Controls the activity of the CBASS cGAMP-activated phospholipase effector protein. In Bacteroides fragilis, this protein is Cyclic GMP-AMP synthase.